Consider the following 372-residue polypeptide: Segmentation polarity homeobox protein engrailed (372 aa).

Disordered stretches follow at residues Met1–Gln35, Tyr47–Thr112, Glu196–Pro246, and Asp261–Ala286. Composition is skewed to basic and acidic residues over residues Asp79–Arg105 and Arg197–Asp215. Low complexity predominate over residues Ser216 to Ser244. Residues Glu280–Ser339 constitute a DNA-binding region (homeobox).

Belongs to the engrailed homeobox family. As to expression, expressed in the middle silk gland but not in the posterior silk gland during the fourth molt/fifth intermolt period.

The protein resides in the nucleus. This protein might be involved in the compartmentalization of the silk gland. This is Segmentation polarity homeobox protein engrailed (en) from Bombyx mori (Silk moth).